Reading from the N-terminus, the 68-residue chain is MIRMGFFLTLTVAVLLTSLICTEAVPTDKRGMERLFDQVLLKDQRNCPYCVVYCCPPAYCQASGCRPP.

The signal sequence occupies residues 1-24 (MIRMGFFLTLTVAVLLTSLICTEA). Positions 25 to 45 (VPTDKRGMERLFDQVLLKDQR) are excised as a propeptide. 3 disulfides stabilise this stretch: Cys47–Cys55, Cys50–Cys60, and Cys54–Cys65.

Belongs to the conotoxin U superfamily. In terms of tissue distribution, expressed by the venom duct.

The protein resides in the secreted. In Conus victoriae (Queen Victoria cone), this protein is Conotoxin Vc7.3.